Reading from the N-terminus, the 222-residue chain is Countin-3 (222 aa).

An N-terminal signal peptide occupies residues 1 to 20 (MNKILSLFLITILLISKVMS). One can recognise a Saposin B-type domain in the interval 21–105 (SSEECKLCTD…ESVKMCQYND (85 aa)). 3 disulfides stabilise this stretch: Cys25/Cys101, Cys28/Cys95, and Cys56/Cys68. N-linked (GlcNAc...) asparagine glycans are attached at residues Asn108, Asn134, and Asn218.

It belongs to the countin family.

The protein localises to the secreted. May control the size of the multicellular structure. This chain is Countin-3 (ctnC), found in Dictyostelium discoideum (Social amoeba).